The following is a 169-amino-acid chain: Sorting nexin-24 (169 aa).

Methionine 1 is subject to N-acetylmethionine. Residues 1 to 125 form the PX domain; the sequence is MEVYIPSFRY…SFDETESEES (125 aa). Residues arginine 38, serine 40, lysine 61, and arginine 74 each coordinate a 1,2-diacyl-sn-glycero-3-phospho-(1D-myo-inositol-3-phosphate). Phosphoserine is present on residues serine 113 and serine 116.

Belongs to the sorting nexin family.

It is found in the cytoplasmic vesicle membrane. In terms of biological role, may be involved in several stages of intracellular trafficking. In Bos taurus (Bovine), this protein is Sorting nexin-24 (SNX24).